A 184-amino-acid polypeptide reads, in one-letter code: Dynactin subunit 6 (184 aa).

It belongs to the dynactin subunits 5/6 family. Dynactin subunit 6 subfamily. Subunit of dynactin, a multiprotein complex part of a tripartite complex with dynein and a adapter, such as BICDL1, BICD2 or HOOK3. The dynactin complex is built around ACTR1A/ACTB filament and consists of an actin-related filament composed of a shoulder domain, a pointed end and a barbed end.

The protein resides in the cytoplasm. The protein localises to the cytoskeleton. Functionally, part of the dynactin complex that activates the molecular motor dynein for ultra-processive transport along microtubules. The protein is Dynactin subunit 6 (dctn6) of Nematostella vectensis (Starlet sea anemone).